An 82-amino-acid polypeptide reads, in one-letter code: Large ribosomal subunit protein bL31 (82 aa).

Positions 16, 18, 37, and 40 each coordinate Zn(2+).

Belongs to the bacterial ribosomal protein bL31 family. Type A subfamily. In terms of assembly, part of the 50S ribosomal subunit. Zn(2+) is required as a cofactor.

In terms of biological role, binds the 23S rRNA. This is Large ribosomal subunit protein bL31 from Blochmanniella pennsylvanica (strain BPEN).